A 427-amino-acid chain; its full sequence is MSQIRAIVGTQWGDEGKGKIVDFLAKEADVVVRAQGGSNAGHTVEAFGKIFKLHLIPSGILYKDKINIIGNGVVIDPESLIEEIESLQKEGISTENLRISDRAHLVMPYHKILDEEQEKQRGEESLGTTKRGIGPAYTDKTERTNLRVCDMLDEDEFVHKLRIVYERKNRILTEVYHKTPMKFGELLEQFMKYGEILRPYITDTIKLLNDAIKEGKKILLEGAQATMLDLDYGTYPYVTSSHPTVGGFCIGAGIAPKHIQEVIGVVKSYTTRVGKGPFPTELLDRVGDSIRERGKEYGTTTGRPRRCGWLDLVVVRYAVLINGIDKIALTKLDTLSNLPKVKVCVGYRHAGKILDLFPASLKVAMECEPIYEEFDGWSEEEIKKAKEYDQLPKNAKKYIEFIEKETGAKVFLIGTGASREDIIIKEN.

GTP is bound by residues 13 to 19 and 41 to 43; these read GDEGKGK and GHT. Asp14 functions as the Proton acceptor in the catalytic mechanism. 2 residues coordinate Mg(2+): Asp14 and Gly41. Residues 14 to 17, 39 to 42, Thr129, Arg143, Gln224, Thr239, and Arg303 each bind IMP; these read DEGK and NAGH. Catalysis depends on His42, which acts as the Proton donor. Residues 117-137 are disordered; sequence QEKQRGEESLGTTKRGIGPAY. Residue 299–305 coordinates substrate; that stretch reads TTTGRPR. GTP is bound by residues Arg305, 331-333, and 414-416; these read KLD and GTG.

Belongs to the adenylosuccinate synthetase family. In terms of assembly, homodimer. Mg(2+) is required as a cofactor.

The protein resides in the cytoplasm. It catalyses the reaction IMP + L-aspartate + GTP = N(6)-(1,2-dicarboxyethyl)-AMP + GDP + phosphate + 2 H(+). Its pathway is purine metabolism; AMP biosynthesis via de novo pathway; AMP from IMP: step 1/2. Its function is as follows. Plays an important role in the de novo pathway of purine nucleotide biosynthesis. Catalyzes the first committed step in the biosynthesis of AMP from IMP. The protein is Adenylosuccinate synthetase of Caldicellulosiruptor saccharolyticus (strain ATCC 43494 / DSM 8903 / Tp8T 6331).